Consider the following 251-residue polypeptide: tRNA pseudouridine synthase A (251 aa).

Catalysis depends on D54, which acts as the Nucleophile. Y111 contacts substrate.

The protein belongs to the tRNA pseudouridine synthase TruA family. As to quaternary structure, homodimer.

The catalysed reaction is uridine(38/39/40) in tRNA = pseudouridine(38/39/40) in tRNA. Its function is as follows. Formation of pseudouridine at positions 38, 39 and 40 in the anticodon stem and loop of transfer RNAs. This Mycoplasma mycoides subsp. mycoides SC (strain CCUG 32753 / NCTC 10114 / PG1) protein is tRNA pseudouridine synthase A.